Consider the following 247-residue polypeptide: Adenosylcobinamide-GDP ribazoletransferase (247 aa).

Transmembrane regions (helical) follow at residues 34–54 (IITF…VFMV), 59–79 (CGAP…TGGF), 113–133 (GGLA…ELAL), 138–158 (ILAS…LLMY), and 194–214 (VLLP…AIFI).

The protein belongs to the CobS family. Mg(2+) is required as a cofactor.

It is found in the cell inner membrane. The catalysed reaction is alpha-ribazole + adenosylcob(III)inamide-GDP = adenosylcob(III)alamin + GMP + H(+). It catalyses the reaction alpha-ribazole 5'-phosphate + adenosylcob(III)inamide-GDP = adenosylcob(III)alamin 5'-phosphate + GMP + H(+). It functions in the pathway cofactor biosynthesis; adenosylcobalamin biosynthesis; adenosylcobalamin from cob(II)yrinate a,c-diamide: step 7/7. In terms of biological role, joins adenosylcobinamide-GDP and alpha-ribazole to generate adenosylcobalamin (Ado-cobalamin). Also synthesizes adenosylcobalamin 5'-phosphate from adenosylcobinamide-GDP and alpha-ribazole 5'-phosphate. This is Adenosylcobinamide-GDP ribazoletransferase from Escherichia coli O45:K1 (strain S88 / ExPEC).